The chain runs to 185 residues: Peptidyl-tRNA hydrolase (185 aa).

Residue Tyr14 participates in tRNA binding. His19 acts as the Proton acceptor in catalysis. TRNA contacts are provided by Tyr65, Asn67, and Asn113.

It belongs to the PTH family. In terms of assembly, monomer.

The protein localises to the cytoplasm. The enzyme catalyses an N-acyl-L-alpha-aminoacyl-tRNA + H2O = an N-acyl-L-amino acid + a tRNA + H(+). Its function is as follows. Hydrolyzes ribosome-free peptidyl-tRNAs (with 1 or more amino acids incorporated), which drop off the ribosome during protein synthesis, or as a result of ribosome stalling. Functionally, catalyzes the release of premature peptidyl moieties from peptidyl-tRNA molecules trapped in stalled 50S ribosomal subunits, and thus maintains levels of free tRNAs and 50S ribosomes. The chain is Peptidyl-tRNA hydrolase from Rickettsia conorii (strain ATCC VR-613 / Malish 7).